Reading from the N-terminus, the 422-residue chain is Dihydroorotase (422 aa).

Zn(2+) contacts are provided by histidine 57 and histidine 59. Substrate is bound by residues 59–61 and asparagine 91; that span reads HLR. The Zn(2+) site is built by aspartate 149, histidine 176, and histidine 229. A substrate-binding site is contributed by asparagine 275. Zn(2+) is bound at residue aspartate 302. The active site involves aspartate 302. Substrate is bound by residues histidine 306 and 320 to 321; that span reads FG.

Belongs to the metallo-dependent hydrolases superfamily. DHOase family. Class I DHOase subfamily. The cofactor is Zn(2+).

The catalysed reaction is (S)-dihydroorotate + H2O = N-carbamoyl-L-aspartate + H(+). It participates in pyrimidine metabolism; UMP biosynthesis via de novo pathway; (S)-dihydroorotate from bicarbonate: step 3/3. Catalyzes the reversible cyclization of carbamoyl aspartate to dihydroorotate. The polypeptide is Dihydroorotase (Endomicrobium trichonymphae).